A 493-amino-acid polypeptide reads, in one-letter code: ATP synthase subunit beta, chloroplastic (493 aa).

170–177 (GGAGVGKT) serves as a coordination point for ATP.

The protein belongs to the ATPase alpha/beta chains family. In terms of assembly, F-type ATPases have 2 components, CF(1) - the catalytic core - and CF(0) - the membrane proton channel. CF(1) has five subunits: alpha(3), beta(3), gamma(1), delta(1), epsilon(1). CF(0) has four main subunits: a(1), b(1), b'(1) and c(9-12).

Its subcellular location is the plastid. The protein resides in the chloroplast thylakoid membrane. It catalyses the reaction ATP + H2O + 4 H(+)(in) = ADP + phosphate + 5 H(+)(out). Produces ATP from ADP in the presence of a proton gradient across the membrane. The catalytic sites are hosted primarily by the beta subunits. The sequence is that of ATP synthase subunit beta, chloroplastic from Staurastrum punctulatum (Green alga).